A 189-amino-acid polypeptide reads, in one-letter code: NADH-quinone oxidoreductase subunit B (189 aa).

Cys39, Cys40, Cys104, and Cys135 together coordinate [4Fe-4S] cluster.

The protein belongs to the complex I 20 kDa subunit family. In terms of assembly, NDH-1 is composed of 14 different subunits. Subunits NuoB, C, D, E, F, and G constitute the peripheral sector of the complex. [4Fe-4S] cluster is required as a cofactor.

The protein resides in the cell inner membrane. The enzyme catalyses a quinone + NADH + 5 H(+)(in) = a quinol + NAD(+) + 4 H(+)(out). Functionally, NDH-1 shuttles electrons from NADH, via FMN and iron-sulfur (Fe-S) centers, to quinones in the respiratory chain. The immediate electron acceptor for the enzyme in this species is believed to be a menaquinone. Couples the redox reaction to proton translocation (for every two electrons transferred, four hydrogen ions are translocated across the cytoplasmic membrane), and thus conserves the redox energy in a proton gradient. This Chlorobium luteolum (strain DSM 273 / BCRC 81028 / 2530) (Pelodictyon luteolum) protein is NADH-quinone oxidoreductase subunit B.